Reading from the N-terminus, the 777-residue chain is Proton-coupled zinc antiporter SLC30A5 (777 aa).

The Cytoplasmic segment spans residues 1–28 (MEEKYSSNVMSSGRLGPVDAPESRLTRY). A helical transmembrane segment spans residues 29 to 49 (IVLLCFTKFLKALGIFESYDL). Topologically, residues 50–52 (LKV) are lumenal. A helical membrane pass occupies residues 53–73 (VHIVQFIFILKLGSTCFMVLF). The Cytoplasmic portion of the chain corresponds to 74–94 (QKPFSSGKSITKRQWVSIVKH). Residues 95-115 (AFVSCIISLLWFFGLTLCGPL) form a helical membrane-spanning segment. The Lumenal portion of the chain corresponds to 116–117 (RT). Residues 118 to 138 (LLLFEHSDIVVISLLTVLFTG) form a helical membrane-spanning segment. Topologically, residues 139 to 148 (SGGGPSKTRG) are cytoplasmic. Residues 149–169 (AAFFIIAVICLLLFDNDDLMA) form a helical membrane-spanning segment. Topologically, residues 170 to 189 (KIAEHPEGHHDSALTHFLYR) are lumenal. Residues 190–210 (AFFLLGVADHKGGVLLLVLAL) traverse the membrane as a helical segment. Residues 211–234 (CFNVGFHTASRKLSLDIGGAKRLQ) lie on the Cytoplasmic side of the membrane. The chain crosses the membrane as a helical span at residues 235 to 255 (ALSHLVSVIILSPWVIILSAT). Over 256 to 263 (TESKIESW) the chain is Lumenal. The chain crosses the membrane as a helical span at residues 264-284 (SALIMPFMTVIFSVMIMDFYV). The Cytoplasmic segment spans residues 285-299 (ESVCSVKMEPSKCAR). The helical transmembrane segment at 300-320 (YGSFLIFASALLLGNFWTHPI) threads the bilayer. Topologically, residues 321-338 (TDQLRAMNKPAHQLHTEH) are lumenal. Residues 339–359 (VLSGGVVVSAIFFILSAQILA) traverse the membrane as a helical segment. Residues 360–414 (SSSRKGQRGTLVGYSPEGTPLYNFMGDALHNTSPSMPRFLKDSLKQILEEYDSRQ) lie on the Cytoplasmic side of the membrane. The chain crosses the membrane as a helical span at residues 415 to 435 (IFYFLCLNLAFTFVEIFYGVW). Over 436–444 (TNSLGLLSD) the chain is Lumenal. The chain crosses the membrane as a helical span at residues 445–465 (GFHMLFDCSALVMGLIAALMT). His447 and Asp451 together coordinate Zn(2+). The Cytoplasmic portion of the chain corresponds to 466 to 484 (RWKATRIFSYGYGRVEILS). A helical membrane pass occupies residues 485 to 505 (GFINGLFLVVIAFFVFIEAVA). At 506 to 516 (RIYDPPDINTD) the chain is on the lumenal side. A helical transmembrane segment spans residues 517–537 (MLTPVSVGGLIVNLVGICAFS). The tract at residues 538-586 (HAHSHGAARGGCPSHDHGHSHHGHGHSHGHNHGHSHSDHGHNHGHTHNH) is his-rich loop; required for zinc transport. The Cytoplasmic portion of the chain corresponds to 538 to 604 (HAHSHGAARG…VGMNANMRGV (67 aa)). The tract at residues 547-593 (GGCPSHDHGHSHHGHGHSHGHNHGHSHSDHGHNHGHTHNHGHSHGSA) is disordered. 2 stretches are compositionally biased toward basic residues: residues 555–571 (GHSH…NHGH) and 579–589 (NHGHTHNHGHS). A helical transmembrane segment spans residues 605–625 (FSHVLADTLGSVGVIVSTILI). Zn(2+) contacts are provided by His607 and Asp611. The Lumenal segment spans residues 626 to 629 (RQFG). A helical membrane pass occupies residues 630–650 (WLIADPLCSLFIAVLIFGSVL). Topologically, residues 651-777 (PLLKDACQVI…KYYKDGTYIM (127 aa)) are cytoplasmic.

This sequence belongs to the cation diffusion facilitator (CDF) transporter (TC 2.A.4) family. SLC30A subfamily. As to quaternary structure, heterodimer with SLC30A6/ZNT6; form a functional zinc ion transmembrane transporter.

Its subcellular location is the golgi apparatus. The protein localises to the golgi stack membrane. The protein resides in the cytoplasmic vesicle. It localises to the COPII-coated vesicle membrane. It is found in the secretory vesicle membrane. Its subcellular location is the trans-Golgi network membrane. It carries out the reaction Zn(2+)(in) + 2 H(+)(out) = Zn(2+)(out) + 2 H(+)(in). In terms of biological role, together with SLC30A6 forms a functional proton-coupled zinc ion antiporter mediating zinc entry into the lumen of organelles along the secretory pathway. By contributing to zinc ion homeostasis within the early secretory pathway, regulates the activation and folding of enzymes like alkaline phosphatases and enzymes involved in phosphatidylinositol glycan anchor biosynthesis. In Xenopus tropicalis (Western clawed frog), this protein is Proton-coupled zinc antiporter SLC30A5 (slc30a5).